Reading from the N-terminus, the 617-residue chain is Probable Xaa-Pro aminopeptidase P (617 aa).

Mn(2+) contacts are provided by D414, D425, E523, and E537.

It belongs to the peptidase M24B family. The cofactor is Mn(2+).

The catalysed reaction is Release of any N-terminal amino acid, including proline, that is linked to proline, even from a dipeptide or tripeptide.. In terms of biological role, catalyzes the removal of a penultimate prolyl residue from the N-termini of peptides. The sequence is that of Probable Xaa-Pro aminopeptidase P (AMPP) from Ajellomyces capsulatus (strain G186AR / H82 / ATCC MYA-2454 / RMSCC 2432) (Darling's disease fungus).